The primary structure comprises 565 residues: Proline--tRNA ligase (565 aa).

It belongs to the class-II aminoacyl-tRNA synthetase family. ProS type 1 subfamily. In terms of assembly, homodimer.

The protein resides in the cytoplasm. The enzyme catalyses tRNA(Pro) + L-proline + ATP = L-prolyl-tRNA(Pro) + AMP + diphosphate. In terms of biological role, catalyzes the attachment of proline to tRNA(Pro) in a two-step reaction: proline is first activated by ATP to form Pro-AMP and then transferred to the acceptor end of tRNA(Pro). As ProRS can inadvertently accommodate and process non-cognate amino acids such as alanine and cysteine, to avoid such errors it has two additional distinct editing activities against alanine. One activity is designated as 'pretransfer' editing and involves the tRNA(Pro)-independent hydrolysis of activated Ala-AMP. The other activity is designated 'posttransfer' editing and involves deacylation of mischarged Ala-tRNA(Pro). The misacylated Cys-tRNA(Pro) is not edited by ProRS. The protein is Proline--tRNA ligase of Francisella philomiragia subsp. philomiragia (strain ATCC 25017 / CCUG 19701 / FSC 153 / O#319-036).